A 485-amino-acid polypeptide reads, in one-letter code: Adenosylhomocysteinase (485 aa).

Positions 64, 139, and 205 each coordinate substrate. 206 to 208 (TTT) is an NAD(+) binding site. Positions 235 and 239 each coordinate substrate. NAD(+) contacts are provided by residues Asn240, 269–274 (GYGDVG), Glu292, Asn327, 348–350 (IGH), and Asn397.

It belongs to the adenosylhomocysteinase family. NAD(+) is required as a cofactor.

The catalysed reaction is S-adenosyl-L-homocysteine + H2O = L-homocysteine + adenosine. It participates in amino-acid biosynthesis; L-homocysteine biosynthesis; L-homocysteine from S-adenosyl-L-homocysteine: step 1/1. Its function is as follows. Adenosylhomocysteine is a competitive inhibitor of S-adenosyl-L-methionine-dependent methyl transferase reactions; therefore adenosylhomocysteinase may play a key role in the control of methylations via regulation of the intracellular concentration of adenosylhomocysteine. This Solanum lycopersicum (Tomato) protein is Adenosylhomocysteinase (SAHH).